Reading from the N-terminus, the 152-residue chain is UPF0756 membrane protein Moth_1009 (152 aa).

4 helical membrane-spanning segments follow: residues 5–25 (LIIL…VALA), 41–61 (IFPF…IAAI), 75–95 (LGHV…LITT), and 117–137 (LILG…GPFI).

The protein belongs to the UPF0756 family.

It is found in the cell membrane. In Moorella thermoacetica (strain ATCC 39073 / JCM 9320), this protein is UPF0756 membrane protein Moth_1009.